A 353-amino-acid polypeptide reads, in one-letter code: MNGTEGPYFYIPMVNTTGIVRSPYEYPQYYLVNPAAYAALGAYMFLLILVGFPVNFLTLYVTLEHKKLRTPLNYILLNLAVADLFMVLGGFTTTMYTSMHGYFVLGRLGCNVEGFFATLGGEIALWSLVVLAIERWVVVCKPISNFRFSEDHAIMGLAFTWVMASACAVPPLVGWSRYIPEGMQCSCGIDYYTRAEGFNNESFVIYMFVCHFLIPLVVVFFCYGRLLCAVKEAAAAQQESETTQRAEREVSRMVVIMVVAFLVCWCPYAGVAWYIFTHQGSEFGPLFMTFPAFFAKSSSIYNPMIYICMNKQFRHCMITTLCCGKNPFEEEEGASTTSKTEASSVSSSSVSPA.

Residues 1–36 are Extracellular-facing; the sequence is MNGTEGPYFYIPMVNTTGIVRSPYEYPQYYLVNPAA. N-linked (GlcNAc...) asparagine glycosylation is found at asparagine 2 and asparagine 15. The chain crosses the membrane as a helical span at residues 37–61; the sequence is YAALGAYMFLLILVGFPVNFLTLYV. The Cytoplasmic portion of the chain corresponds to 62-73; it reads TLEHKKLRTPLN. Residues 74–96 form a helical membrane-spanning segment; the sequence is YILLNLAVADLFMVLGGFTTTMY. Residues 97–110 are Extracellular-facing; it reads TSMHGYFVLGRLGC. Cysteine 110 and cysteine 187 form a disulfide bridge. A helical transmembrane segment spans residues 111–133; sequence NVEGFFATLGGEIALWSLVVLAI. The 'Ionic lock' involved in activated form stabilization signature appears at 134-136; sequence ERW. Over 134–152 the chain is Cytoplasmic; that stretch reads ERWVVVCKPISNFRFSEDH. A helical transmembrane segment spans residues 153–173; the sequence is AIMGLAFTWVMASACAVPPLV. At 174 to 202 the chain is on the extracellular side; that stretch reads GWSRYIPEGMQCSCGIDYYTRAEGFNNES. N-linked (GlcNAc...) asparagine glycosylation occurs at asparagine 200. The helical transmembrane segment at 203–224 threads the bilayer; the sequence is FVIYMFVCHFLIPLVVVFFCYG. At 225–252 the chain is on the cytoplasmic side; it reads RLLCAVKEAAAAQQESETTQRAEREVSR. Residues 253–274 traverse the membrane as a helical segment; sequence MVVIMVVAFLVCWCPYAGVAWY. Residues 275–286 lie on the Extracellular side of the membrane; the sequence is IFTHQGSEFGPL. Residues 287-308 form a helical membrane-spanning segment; that stretch reads FMTFPAFFAKSSSIYNPMIYIC. At lysine 296 the chain carries N6-(retinylidene)lysine. At 309-353 the chain is on the cytoplasmic side; it reads MNKQFRHCMITTLCCGKNPFEEEEGASTTSKTEASSVSSSSVSPA. Residues cysteine 322 and cysteine 323 are each lipidated (S-palmitoyl cysteine). The segment at 330–353 is disordered; that stretch reads EEEGASTTSKTEASSVSSSSVSPA. Positions 334–353 are enriched in low complexity; the sequence is ASTTSKTEASSVSSSSVSPA.

The protein belongs to the G-protein coupled receptor 1 family. Opsin subfamily. Phosphorylated on some or all of the serine and threonine residues present in the C-terminal region. In terms of processing, contains one covalently linked retinal chromophore.

It is found in the membrane. The protein resides in the cell projection. It localises to the cilium. The protein localises to the photoreceptor outer segment. Photoreceptor required for image-forming vision at low light intensity. While most salt water fish species use retinal as chromophore, most freshwater fish use 3-dehydroretinal, or a mixture of retinal and 3-dehydroretinal. Light-induced isomerization of 11-cis to all-trans retinal triggers a conformational change that activates signaling via G-proteins. Subsequent receptor phosphorylation mediates displacement of the bound G-protein alpha subunit by arrestin and terminates signaling. The chain is Rhodopsin (rho) from Chelon labrosus (Thicklip grey mullet).